We begin with the raw amino-acid sequence, 286 residues long: Bifunctional protein FolD (286 aa).

NADP(+) contacts are provided by residues 165-167, Ser-190, and Val-231; that span reads GRS.

This sequence belongs to the tetrahydrofolate dehydrogenase/cyclohydrolase family. Homodimer.

It catalyses the reaction (6R)-5,10-methylene-5,6,7,8-tetrahydrofolate + NADP(+) = (6R)-5,10-methenyltetrahydrofolate + NADPH. It carries out the reaction (6R)-5,10-methenyltetrahydrofolate + H2O = (6R)-10-formyltetrahydrofolate + H(+). The protein operates within one-carbon metabolism; tetrahydrofolate interconversion. Its function is as follows. Catalyzes the oxidation of 5,10-methylenetetrahydrofolate to 5,10-methenyltetrahydrofolate and then the hydrolysis of 5,10-methenyltetrahydrofolate to 10-formyltetrahydrofolate. The polypeptide is Bifunctional protein FolD (Bacillus cereus (strain AH187)).